A 931-amino-acid polypeptide reads, in one-letter code: Phosphoenolpyruvate carboxylase (931 aa).

Active-site residues include histidine 158 and lysine 593.

The protein belongs to the PEPCase type 1 family. The cofactor is Mg(2+).

The enzyme catalyses oxaloacetate + phosphate = phosphoenolpyruvate + hydrogencarbonate. Its function is as follows. Forms oxaloacetate, a four-carbon dicarboxylic acid source for the tricarboxylic acid cycle. This Azorhizobium caulinodans (strain ATCC 43989 / DSM 5975 / JCM 20966 / LMG 6465 / NBRC 14845 / NCIMB 13405 / ORS 571) protein is Phosphoenolpyruvate carboxylase.